A 91-amino-acid chain; its full sequence is UPF0358 protein SAB0977 (91 aa).

It belongs to the UPF0358 family.

This chain is UPF0358 protein SAB0977, found in Staphylococcus aureus (strain bovine RF122 / ET3-1).